A 196-amino-acid chain; its full sequence is Putative HTH-type transcriptional regulator in exeN 3'region (196 aa).

Positions A120 to L185 constitute an HTH luxR-type domain. Positions T144–K163 form a DNA-binding region, H-T-H motif.

The protein is Putative HTH-type transcriptional regulator in exeN 3'region of Aeromonas salmonicida.